We begin with the raw amino-acid sequence, 381 residues long: Peptidoglycan glycosyltransferase MrdB (381 aa).

10 helical membrane-spanning segments follow: residues Phe-11–Phe-31, Lys-40–Phe-60, Trp-66–Tyr-86, Phe-99–Ala-119, Tyr-132–Leu-152, Asp-156–Leu-176, Val-180–His-200, Phe-263–Phe-283, Ile-297–Thr-317, and Leu-328–Leu-348.

This sequence belongs to the SEDS family. MrdB/RodA subfamily.

It localises to the cell inner membrane. The catalysed reaction is [GlcNAc-(1-&gt;4)-Mur2Ac(oyl-L-Ala-gamma-D-Glu-L-Lys-D-Ala-D-Ala)](n)-di-trans,octa-cis-undecaprenyl diphosphate + beta-D-GlcNAc-(1-&gt;4)-Mur2Ac(oyl-L-Ala-gamma-D-Glu-L-Lys-D-Ala-D-Ala)-di-trans,octa-cis-undecaprenyl diphosphate = [GlcNAc-(1-&gt;4)-Mur2Ac(oyl-L-Ala-gamma-D-Glu-L-Lys-D-Ala-D-Ala)](n+1)-di-trans,octa-cis-undecaprenyl diphosphate + di-trans,octa-cis-undecaprenyl diphosphate + H(+). It participates in cell wall biogenesis; peptidoglycan biosynthesis. In terms of biological role, peptidoglycan polymerase that is essential for cell wall elongation. The polypeptide is Peptidoglycan glycosyltransferase MrdB (Helicobacter pylori (strain ATCC 700392 / 26695) (Campylobacter pylori)).